The following is a 693-amino-acid chain: TGF-beta-activated kinase 1 and MAP3K7-binding protein 2 (693 aa).

The 44-residue stretch at 8–51 (IDFQVLHDLRQKFPEVPEVVVSRCMLQNNNNLDACCAVLSQEST) folds into the CUE domain. The tract at residues 90–171 (HGREGSRVNG…KGTSNLSQQT (82 aa)) is disordered. Polar residues-rich tracts occupy residues 97–130 (VNGS…QTAP), 143–153 (PSTSGASNSTP), and 162–171 (KGTSNLSQQT). Arg173 carries the asymmetric dimethylarginine modification. Polar residues predominate over residues 223 to 282 (SGTARQTQQHSGWVSQFNPMNPQQAYQPSQPGPWTTYPASNPLPHTSTQQPNQQGHQTSH). The disordered stretch occupies residues 223–310 (SGTARQTQQH…SGSSQSSAHS (88 aa)). Residues 286–310 (PISSPTTPQPPTIHSSGSSQSSAHS) show a composition bias toward low complexity. A Glycyl lysine isopeptide (Lys-Gly) (interchain with G-Cter in SUMO) cross-link involves residue Lys329. The tract at residues 330–380 (LEPPQRNSSSKLRSSGPRTASTSSLVNSQTLNRNQPTVYIAASPPNTDEMI) is disordered. A compositionally biased stretch (polar residues) spans 334-366 (QRNSSSKLRSSGPRTASTSSLVNSQTLNRNQPT). Ser372, Ser450, Ser482, and Ser524 each carry phosphoserine. Residues 532 to 619 (YTQALLVHQK…TKEIDLFQAR (88 aa)) are a coiled coil. Lys562 participates in a covalent cross-link: Glycyl lysine isopeptide (Lys-Gly) (interchain with G-Cter in SUMO). A Phosphoserine modification is found at Ser582. Lys611 participates in a covalent cross-link: Glycyl lysine isopeptide (Lys-Gly) (interchain with G-Cter in ubiquitin). A disordered region spans residues 640–663 (PVPPKPKDQRSTIKAPKTQDAEDE). A RanBP2-type zinc finger spans residues 663 to 693 (EEGAQWNCTACTFLNHPALIRCEQCEMPRHF). The segment at 675–685 (FLNHPALIRCE) is interaction with polyubiquitin.

Interacts with MAP3K7 and TRAF6. Identified in the TRIKA2 complex composed of MAP3K7, TAB1 and TAB2. Binds 'Lys-63'-linked polyubiquitin chains. Interacts with NCOR1 and HDAC3 to form a ternary complex. Interacts (via C-terminal) with NUMBL (via PTB domain). Interacts (via the C-terminus) with DYNC2I2 (via WD domains). Interacts with RBCK1. Interacts with TRIM5. Interacts with TRIM38 (via B30.2/SPRY domain), leading to its translocation to lysosomes and degradation. Interacts with ASB1; this interaction promotes TAB2 stability. Post-translationally, SUMOylated by TRIM60; leading to inhibition of MAPK/NF-kappaB activation and the innate immune response. In terms of processing, ubiquitinated; following IL1 stimulation or TRAF6 overexpression. Ubiquitination involves RBCK1 leading to proteasomal degradation. Ubiquitinated at Lys-611 by TRIM45 leading to proteasomal degradation. Degraded in a lysosome-dependent manner following interaction with TRIM38. Post-translationally, phosphorylated. As to expression, widely expressed.

Its subcellular location is the membrane. The protein localises to the endosome membrane. It is found in the lysosome membrane. The protein resides in the cytoplasm. It localises to the cytosol. Its subcellular location is the nucleus. Functionally, adapter required to activate the JNK and NF-kappa-B signaling pathways through the specific recognition of 'Lys-63'-linked polyubiquitin chains by its RanBP2-type zinc finger (NZF). Acts as an adapter linking MAP3K7/TAK1 and TRAF6 to 'Lys-63'-linked polyubiquitin chains. The RanBP2-type zinc finger (NZF) specifically recognizes Lys-63'-linked polyubiquitin chains unanchored or anchored to the substrate proteins such as RIPK1/RIP1 and RIPK2: this acts as a scaffold to organize a large signaling complex to promote autophosphorylation of MAP3K7/TAK1, and subsequent activation of I-kappa-B-kinase (IKK) core complex by MAP3K7/TAK1. Also recognizes and binds Lys-63'-linked polyubiquitin chains of heterotypic 'Lys-63'-/'Lys-48'-linked branched ubiquitin chains. Regulates the IL1-mediated translocation of NCOR1 out of the nucleus. Involved in heart development. This Mus musculus (Mouse) protein is TGF-beta-activated kinase 1 and MAP3K7-binding protein 2 (Tab2).